We begin with the raw amino-acid sequence, 129 residues long: Glycine cleavage system H protein (129 aa).

The region spanning 24–106 is the Lipoyl-binding domain; sequence IATIGISAFA…YGEGWLVKVR (83 aa). At Lys-65 the chain carries N6-lipoyllysine.

Belongs to the GcvH family. The glycine cleavage system is composed of four proteins: P, T, L and H. The cofactor is (R)-lipoate.

Its function is as follows. The glycine cleavage system catalyzes the degradation of glycine. The H protein shuttles the methylamine group of glycine from the P protein to the T protein. The protein is Glycine cleavage system H protein of Cyanothece sp. (strain PCC 7425 / ATCC 29141).